Here is a 346-residue protein sequence, read N- to C-terminus: Glycosyltransferase 1 domain-containing protein 1 (346 aa).

The N-terminal stretch at 1–16 is a signal peptide; sequence MRLLFLAVLRPHTGNA.

It belongs to the glycosyltransferase group 1 family. Glycosyltransferase 4 subfamily.

It localises to the secreted. This chain is Glycosyltransferase 1 domain-containing protein 1 (GLT1D1), found in Pongo abelii (Sumatran orangutan).